The following is a 472-amino-acid chain: Serine/threonine-protein kinase ULK3 (472 aa).

Positions 14–270 (FILTERLGSG…FQDFFAHPWV (257 aa)) constitute a Protein kinase domain. Residues 20–28 (LGSGTYATV) and Lys-44 each bind ATP. The active-site Proton acceptor is Asp-137. Ser-176 carries the post-translational modification Phosphoserine. The 67-residue stretch at 281–347 (LAQATALVVE…VSRAEELKAI (67 aa)) folds into the MIT 1 domain. Ser-350 and Ser-384 each carry phosphoserine; by autocatalysis. The 69-residue stretch at 376–444 (LLAALEVASA…ARAEYLKEQI (69 aa)) folds into the MIT 2 domain. A Phosphoserine modification is found at Ser-464.

This sequence belongs to the protein kinase superfamily. Ser/Thr protein kinase family. APG1/unc-51/ULK1 subfamily. Interacts (via protein kinase domain) with SUFU. Autophosphorylated. Autophosphorylation is blocked by interaction with SUFU.

The protein localises to the cytoplasm. The catalysed reaction is L-seryl-[protein] + ATP = O-phospho-L-seryl-[protein] + ADP + H(+). The enzyme catalyses L-threonyl-[protein] + ATP = O-phospho-L-threonyl-[protein] + ADP + H(+). In terms of biological role, serine/threonine protein kinase that acts as a regulator of Sonic hedgehog (SHH) signaling and autophagy. Acts as a negative regulator of SHH signaling in the absence of SHH ligand: interacts with SUFU, thereby inactivating the protein kinase activity and preventing phosphorylation of GLI proteins (GLI1, GLI2 and/or GLI3). Positively regulates SHH signaling in the presence of SHH: dissociates from SUFU, autophosphorylates and mediates phosphorylation of GLI2, activating it and promoting its nuclear translocation. Phosphorylates in vitro GLI2, as well as GLI1 and GLI3, although less efficiently. Also acts as a regulator of autophagy: following cellular senescence, able to induce autophagy. The polypeptide is Serine/threonine-protein kinase ULK3 (Ulk3) (Rattus norvegicus (Rat)).